We begin with the raw amino-acid sequence, 94 residues long: MLQSNEYFSGKVKSIGFTSSSTGRASVGVMVEGEYLFSTAEPEEMTVISGALNVLLPEATEWQVYQAGQVFNVPGHSEFHLQVAEPTSYLCRYL.

The protein belongs to the nucleoside phosphorylase PpnP family.

It catalyses the reaction a purine D-ribonucleoside + phosphate = a purine nucleobase + alpha-D-ribose 1-phosphate. The enzyme catalyses adenosine + phosphate = alpha-D-ribose 1-phosphate + adenine. It carries out the reaction cytidine + phosphate = cytosine + alpha-D-ribose 1-phosphate. The catalysed reaction is guanosine + phosphate = alpha-D-ribose 1-phosphate + guanine. It catalyses the reaction inosine + phosphate = alpha-D-ribose 1-phosphate + hypoxanthine. The enzyme catalyses thymidine + phosphate = 2-deoxy-alpha-D-ribose 1-phosphate + thymine. It carries out the reaction uridine + phosphate = alpha-D-ribose 1-phosphate + uracil. The catalysed reaction is xanthosine + phosphate = alpha-D-ribose 1-phosphate + xanthine. Functionally, catalyzes the phosphorolysis of diverse nucleosides, yielding D-ribose 1-phosphate and the respective free bases. Can use uridine, adenosine, guanosine, cytidine, thymidine, inosine and xanthosine as substrates. Also catalyzes the reverse reactions. The protein is Pyrimidine/purine nucleoside phosphorylase of Escherichia fergusonii (strain ATCC 35469 / DSM 13698 / CCUG 18766 / IAM 14443 / JCM 21226 / LMG 7866 / NBRC 102419 / NCTC 12128 / CDC 0568-73).